The primary structure comprises 211 residues: ATP-dependent Clp protease proteolytic subunit (211 aa).

Ser106 functions as the Nucleophile in the catalytic mechanism. His131 is a catalytic residue.

This sequence belongs to the peptidase S14 family. As to quaternary structure, fourteen ClpP subunits assemble into 2 heptameric rings which stack back to back to give a disk-like structure with a central cavity, resembling the structure of eukaryotic proteasomes.

The protein localises to the cytoplasm. The enzyme catalyses Hydrolysis of proteins to small peptides in the presence of ATP and magnesium. alpha-casein is the usual test substrate. In the absence of ATP, only oligopeptides shorter than five residues are hydrolyzed (such as succinyl-Leu-Tyr-|-NHMec, and Leu-Tyr-Leu-|-Tyr-Trp, in which cleavage of the -Tyr-|-Leu- and -Tyr-|-Trp bonds also occurs).. Cleaves peptides in various proteins in a process that requires ATP hydrolysis. Has a chymotrypsin-like activity. Plays a major role in the degradation of misfolded proteins. The sequence is that of ATP-dependent Clp protease proteolytic subunit from Nitrobacter hamburgensis (strain DSM 10229 / NCIMB 13809 / X14).